An 81-amino-acid polypeptide reads, in one-letter code: Small ribosomal subunit protein bS16 (81 aa).

Belongs to the bacterial ribosomal protein bS16 family.

This Lachnospira eligens (strain ATCC 27750 / DSM 3376 / VPI C15-48 / C15-B4) (Eubacterium eligens) protein is Small ribosomal subunit protein bS16.